The following is a 252-amino-acid chain: PF03932 family protein CutC (252 aa).

Belongs to the CutC family.

It is found in the cytoplasm. The protein is PF03932 family protein CutC of Pectobacterium atrosepticum (strain SCRI 1043 / ATCC BAA-672) (Erwinia carotovora subsp. atroseptica).